The following is a 421-amino-acid chain: UDP-N-acetylglucosamine 1-carboxyvinyltransferase (421 aa).

23–24 (KN) provides a ligand contact to phosphoenolpyruvate. R92 is a UDP-N-acetyl-alpha-D-glucosamine binding site. Catalysis depends on C116, which acts as the Proton donor. At C116 the chain carries 2-(S-cysteinyl)pyruvic acid O-phosphothioketal. UDP-N-acetyl-alpha-D-glucosamine-binding positions include 121-125 (RPVDL), 161-164 (KVSV), D306, and I328.

The protein belongs to the EPSP synthase family. MurA subfamily.

The protein resides in the cytoplasm. It catalyses the reaction phosphoenolpyruvate + UDP-N-acetyl-alpha-D-glucosamine = UDP-N-acetyl-3-O-(1-carboxyvinyl)-alpha-D-glucosamine + phosphate. The protein operates within cell wall biogenesis; peptidoglycan biosynthesis. In terms of biological role, cell wall formation. Adds enolpyruvyl to UDP-N-acetylglucosamine. The chain is UDP-N-acetylglucosamine 1-carboxyvinyltransferase from Vibrio campbellii (strain ATCC BAA-1116).